We begin with the raw amino-acid sequence, 373 residues long: GDP-mannose 4,6 dehydratase 2 (373 aa).

A compositionally biased stretch (polar residues) spans 1-15 (MASENNGSRSDSESI). The segment at 1-21 (MASENNGSRSDSESITAPKAD) is disordered. NADP(+) contacts are provided by residues 35–40 (GITGQD), Arg60, 91–92 (DL), 113–117 (LAAQS), and Tyr128. Residue Ser117 participates in substrate binding. Ser162 contacts substrate. Ser162 is a catalytic residue. Residues Glu164 and Tyr185 each act as nucleophile in the active site. Residue Tyr185 coordinates substrate. Lys189 is an NADP(+) binding site. Asn214 contacts substrate. Residues His215 and Arg220 each contribute to the NADP(+) site. Substrate contacts are provided by residues 220–228 (RGENFVTRK), Gly247, Arg253, and 314–317 (RPAE).

The protein belongs to the NAD(P)-dependent epimerase/dehydratase family. GDP-mannose 4,6-dehydratase subfamily. Homotetramer. Binds to GER1. NADP(+) is required as a cofactor. Expressed in roots, flowers, siliques, leaves and stems. Not expressed in the root meristem and the proximal part of the elongation zone, or in emerging lateral roots. Expressed in trichomes and guard cells, and in pollen just before anthesis.

It catalyses the reaction GDP-alpha-D-mannose = GDP-4-dehydro-alpha-D-rhamnose + H2O. Its pathway is nucleotide-sugar biosynthesis; GDP-L-fucose biosynthesis via de novo pathway; GDP-L-fucose from GDP-alpha-D-mannose: step 1/2. In terms of biological role, catalyzes the conversion of GDP-D-mannose to GDP-4-dehydro-6-deoxy-D-mannose. The sequence is that of GDP-mannose 4,6 dehydratase 2 (MUR1) from Arabidopsis thaliana (Mouse-ear cress).